Here is a 646-residue protein sequence, read N- to C-terminus: Hexon protein p72 (646 aa).

This sequence belongs to the NCLDV major capsid protein family. Homotrimer. The membrane-bound form, but not the cytosolic one, assembles into large complexes. Interacts with the minor capsid proteins M1249L and p17; these interactions form a rigid zipper structure that stabilizes the capsomers.

It localises to the virion. Its subcellular location is the host endoplasmic reticulum membrane. The protein resides in the host cytoplasm. It is found in the host cytosol. Functionally, capsid protein that self-assembles to form the pseudo-hexameric capsomers of the icosahedral capsid. The capsid is constructed of 2760 pseudo-hexameric capsomers and 12 pentameric capsomers, with a T=277 symmetry, about 200 nm in diameter. The capsid encapsulates the DNA-containing nucleoid, the core shell and the inner membrane. Plays an essential role in virion assembly. Involved in virus attachment to the host cell. In Ornithodoros (relapsing fever ticks), this protein is Hexon protein p72.